The following is a 126-amino-acid chain: Protein K7 (126 aa).

The chain crosses the membrane as a helical span at residues 24-44 (LPLHLWILCSLLAFLPLLVFI).

Interacts with host CAMLG; this interaction allows efficient apoptosis inhibition. Additionally, interacts with vGPCR/ORF74 and induces its proteasomeal degradation.

Its subcellular location is the host membrane. It localises to the host mitochondrion. In terms of biological role, plays a role in the inhibition of host apoptosis to allow completion of the viral lytic replication and may thus favor the maintenance of persistent infection in infected host. The polypeptide is Protein K7 (K7) (Homo sapiens (Human)).